Here is a 341-residue protein sequence, read N- to C-terminus: Protein phosphatase methylesterase 1 (341 aa).

The tract at residues 1–24 is disordered; sequence MAFRKEELSQTLYENESEQSSETK. Polar residues predominate over residues 9 to 20; that stretch reads SQTLYENESEQS. Residues serine 153, aspartate 178, and histidine 304 contribute to the active site.

Belongs to the AB hydrolase superfamily.

It carries out the reaction [phosphatase 2A protein]-C-terminal L-leucine methyl ester + H2O = [phosphatase 2A protein]-C-terminal L-leucine + methanol + H(+). Its function is as follows. Demethylates proteins that have been reversibly carboxymethylated. Demethylates the phosphatase PP2A catalytic subunit. The polypeptide is Protein phosphatase methylesterase 1 (ppe1) (Schizosaccharomyces pombe (strain 972 / ATCC 24843) (Fission yeast)).